The chain runs to 546 residues: Chaperonin GroEL (546 aa).

Residues 30-33 (TLGP), lysine 51, 87-91 (DGTTT), glycine 415, and aspartate 495 contribute to the ATP site.

Belongs to the chaperonin (HSP60) family. In terms of assembly, forms a cylinder of 14 subunits composed of two heptameric rings stacked back-to-back. Interacts with the co-chaperonin GroES.

It is found in the cytoplasm. The enzyme catalyses ATP + H2O + a folded polypeptide = ADP + phosphate + an unfolded polypeptide.. Together with its co-chaperonin GroES, plays an essential role in assisting protein folding. The GroEL-GroES system forms a nano-cage that allows encapsulation of the non-native substrate proteins and provides a physical environment optimized to promote and accelerate protein folding. The sequence is that of Chaperonin GroEL from Alteromonas mediterranea (strain DSM 17117 / CIP 110805 / LMG 28347 / Deep ecotype).